Here is a 187-residue protein sequence, read N- to C-terminus: MGRYAKEPDNASKSCKSRGSNLRVHFKNTRETALAIKRMPLRRAQRFLKNVIEKKECVPFRRFNGGVGRCAQAKHWGTSVGRWPKKSAEFLLQLLKNAEANADYKGLDVDRLVINHIQVNRAPCLRRRTYRAHGRINPYMSSPCHIELSLTEKEDVVTKATDESEQAKKKLSKKKLQRQKEKMMRNE.

2 stretches are compositionally biased toward basic and acidic residues: residues Thr158 to Lys168 and Arg178 to Glu187. A disordered region spans residues Thr158–Glu187.

This sequence belongs to the universal ribosomal protein uL22 family.

This chain is Large ribosomal subunit protein uL22 (RpL17), found in Anopheles gambiae (African malaria mosquito).